The following is a 623-amino-acid chain: Glutathione import ATP-binding protein GsiA (623 aa).

ABC transporter domains lie at 15 to 269 (VENL…RALL) and 314 to 564 (LRVR…RKLL). Residues 49–56 (GESGSGKS) and 357–364 (GESGSGKS) contribute to the ATP site.

The protein belongs to the ABC transporter superfamily. Glutathione importer (TC 3.A.1.5.11) family. In terms of assembly, the complex is composed of two ATP-binding proteins (GsiA), two transmembrane proteins (GsiC and GsiD) and a solute-binding protein (GsiB).

Its subcellular location is the cell inner membrane. The catalysed reaction is glutathione(out) + ATP + H2O = glutathione(in) + ADP + phosphate + H(+). Its activity is regulated as follows. Inhibited by verapamil but not by carbonyl cyanide m-chlorophenylhydrazone (CCCP). Its function is as follows. Part of the ABC transporter complex GsiABCD involved in glutathione import. Responsible for energy coupling to the transport system. In Escherichia coli (strain K12), this protein is Glutathione import ATP-binding protein GsiA.